Here is a 261-residue protein sequence, read N- to C-terminus: Thiamine thiazole synthase (261 aa).

NAD(+) is bound by residues Ser40, 59 to 60 (ER), Gly67, Val133, and 159 to 161 (HID). Fe cation is bound by residues Asp161 and His176. 2 residues coordinate NAD(+): Ser179 and Met226. Residue Arg236 participates in glycine binding.

The protein belongs to the THI4 family. In terms of assembly, homooctamer; tetramer of dimers. Requires Fe(2+) as cofactor.

It carries out the reaction hydrogen sulfide + glycine + NAD(+) = ADP-5-ethyl-4-methylthiazole-2-carboxylate + nicotinamide + 3 H2O + H(+). It participates in cofactor biosynthesis; thiamine diphosphate biosynthesis. Its function is as follows. Involved in the biosynthesis of the thiazole moiety of thiamine. Catalyzes the conversion of NAD and glycine to adenosine diphosphate 5-(2-hydroxyethyl)-4-methylthiazole-2-carboxylate (ADT), an adenylated thiazole intermediate, using free sulfide as a source of sulfur. The sequence is that of Thiamine thiazole synthase from Methanococcus maripaludis (strain C6 / ATCC BAA-1332).